Reading from the N-terminus, the 265-residue chain is Early E4 31 kDa protein (265 aa).

The protein belongs to the adenoviridae E4 30 to 34 kDa protein family. Interacts with E1B-55k.

The protein resides in the host nucleus. The protein localises to the host cytoplasm. In terms of biological role, plays a major role to prevent cellular inhibition of viral genome replication by nuclear bodies. Assembles an SCF-like E3 ubiquitin ligase complex based on the cellular proteins ELOB, ELOC, CUL5 and RBX1, in cooperation with viral E1B-55K. This viral RING-type ligase ubiquitinates cellular substrates prior to proteasomal degradation: p53/TP53, LIG4, MRE11-RAD50-NBS1 (MRN) complex, ITGA3, DAXX and BLM. This chain is Early E4 31 kDa protein, found in Canis lupus familiaris (Dog).